We begin with the raw amino-acid sequence, 148 residues long: D-aminoacyl-tRNA deacylase (148 aa).

The Gly-cisPro motif, important for rejection of L-amino acids motif lies at 137 to 138 (GP).

This sequence belongs to the DTD family. Homodimer.

Its subcellular location is the cytoplasm. It catalyses the reaction glycyl-tRNA(Ala) + H2O = tRNA(Ala) + glycine + H(+). The catalysed reaction is a D-aminoacyl-tRNA + H2O = a tRNA + a D-alpha-amino acid + H(+). In terms of biological role, an aminoacyl-tRNA editing enzyme that deacylates mischarged D-aminoacyl-tRNAs. Also deacylates mischarged glycyl-tRNA(Ala), protecting cells against glycine mischarging by AlaRS. Acts via tRNA-based rather than protein-based catalysis; rejects L-amino acids rather than detecting D-amino acids in the active site. By recycling D-aminoacyl-tRNA to D-amino acids and free tRNA molecules, this enzyme counteracts the toxicity associated with the formation of D-aminoacyl-tRNA entities in vivo and helps enforce protein L-homochirality. The chain is D-aminoacyl-tRNA deacylase from Aquifex aeolicus (strain VF5).